The primary structure comprises 292 residues: Phosphatidylserine decarboxylase proenzyme (292 aa).

Catalysis depends on charge relay system; for autoendoproteolytic cleavage activity residues aspartate 92, histidine 149, and serine 255. Catalysis depends on serine 255, which acts as the Schiff-base intermediate with substrate; via pyruvic acid; for decarboxylase activity. Serine 255 is subject to Pyruvic acid (Ser); by autocatalysis.

This sequence belongs to the phosphatidylserine decarboxylase family. PSD-B subfamily. Prokaryotic type I sub-subfamily. Heterodimer of a large membrane-associated beta subunit and a small pyruvoyl-containing alpha subunit. Pyruvate serves as cofactor. Is synthesized initially as an inactive proenzyme. Formation of the active enzyme involves a self-maturation process in which the active site pyruvoyl group is generated from an internal serine residue via an autocatalytic post-translational modification. Two non-identical subunits are generated from the proenzyme in this reaction, and the pyruvate is formed at the N-terminus of the alpha chain, which is derived from the carboxyl end of the proenzyme. The autoendoproteolytic cleavage occurs by a canonical serine protease mechanism, in which the side chain hydroxyl group of the serine supplies its oxygen atom to form the C-terminus of the beta chain, while the remainder of the serine residue undergoes an oxidative deamination to produce ammonia and the pyruvoyl prosthetic group on the alpha chain. During this reaction, the Ser that is part of the protease active site of the proenzyme becomes the pyruvoyl prosthetic group, which constitutes an essential element of the active site of the mature decarboxylase.

Its subcellular location is the cell membrane. It catalyses the reaction a 1,2-diacyl-sn-glycero-3-phospho-L-serine + H(+) = a 1,2-diacyl-sn-glycero-3-phosphoethanolamine + CO2. Its pathway is phospholipid metabolism; phosphatidylethanolamine biosynthesis; phosphatidylethanolamine from CDP-diacylglycerol: step 2/2. Catalyzes the formation of phosphatidylethanolamine (PtdEtn) from phosphatidylserine (PtdSer). This Idiomarina loihiensis (strain ATCC BAA-735 / DSM 15497 / L2-TR) protein is Phosphatidylserine decarboxylase proenzyme.